We begin with the raw amino-acid sequence, 180 residues long: ATP synthase subunit delta (180 aa).

The protein belongs to the ATPase delta chain family. In terms of assembly, F-type ATPases have 2 components, F(1) - the catalytic core - and F(0) - the membrane proton channel. F(1) has five subunits: alpha(3), beta(3), gamma(1), delta(1), epsilon(1). F(0) has three main subunits: a(1), b(2) and c(10-14). The alpha and beta chains form an alternating ring which encloses part of the gamma chain. F(1) is attached to F(0) by a central stalk formed by the gamma and epsilon chains, while a peripheral stalk is formed by the delta and b chains.

It localises to the cell inner membrane. Its function is as follows. F(1)F(0) ATP synthase produces ATP from ADP in the presence of a proton or sodium gradient. F-type ATPases consist of two structural domains, F(1) containing the extramembraneous catalytic core and F(0) containing the membrane proton channel, linked together by a central stalk and a peripheral stalk. During catalysis, ATP synthesis in the catalytic domain of F(1) is coupled via a rotary mechanism of the central stalk subunits to proton translocation. Functionally, this protein is part of the stalk that links CF(0) to CF(1). It either transmits conformational changes from CF(0) to CF(1) or is implicated in proton conduction. The chain is ATP synthase subunit delta from Cupriavidus metallidurans (strain ATCC 43123 / DSM 2839 / NBRC 102507 / CH34) (Ralstonia metallidurans).